The chain runs to 402 residues: MSVGMAAPHAPYACDPDRSRGRLVAEPPSRTRSPFRRDCDRVIHSTAFRRLKYKTQVFVFHEGDHYRTRLTHSLEVAQIARALARQLGLDEDLTETLALAHDLGHPPFGHAGERALDACLKEFGGFDHNAQALRVVAALEHRYPEFDGLNLTWESLEGIVKHNGPLTDRSGAPVGHYREHGIPVGIADYIKVYDLELWSFASLEAQVAAIADDIAYDAHDIDDGLRAGLFDLDDLKAMPLTAAIIAETSAHYPDLEDVRRGAELVRELISHLIGAVFAEAQKNLAATKPQSAQDVRQQSRALIAFPADVAEEEAAIKRFLYQHMYRHKRVMRVMGEAKQILFDLFAKYLKSPAELPPEWLTGAEADNEGDRARRIGNFIAGMTDRFALTEHQRLFDSTPDLR.

Residues 69–217 enclose the HD domain; the sequence is RLTHSLEVAQ…AAIADDIAYD (149 aa).

It belongs to the dGTPase family. Type 2 subfamily.

The polypeptide is Deoxyguanosinetriphosphate triphosphohydrolase-like protein (Bradyrhizobium diazoefficiens (strain JCM 10833 / BCRC 13528 / IAM 13628 / NBRC 14792 / USDA 110)).